Here is a 147-residue protein sequence, read N- to C-terminus: Putative pre-16S rRNA nuclease (147 aa).

Belongs to the YqgF nuclease family.

The protein resides in the cytoplasm. Could be a nuclease involved in processing of the 5'-end of pre-16S rRNA. The chain is Putative pre-16S rRNA nuclease from Ligilactobacillus salivarius (strain UCC118) (Lactobacillus salivarius).